Reading from the N-terminus, the 89-residue chain is OMEGA-ectatommitoxin(02)-Rm1b (89 aa).

The signal sequence occupies residues 1–30; that stretch reads MKDSYISIVIAYLMVTFILVSSMPIEGEKG. 3 disulfides stabilise this stretch: C39/C52, C47/C68, and C70/C79. Residues 43–80 form the EGF-like domain; sequence YANYCFNGKCVHFVAQDEPGKPCYSCICDKFYIGKRCG.

Belongs to the EGF domain peptide family. As to expression, expressed by the venom gland.

It is found in the secreted. Its function is as follows. Ant peptide with probable defensive activity which acts as a potent agonist of the mammalian epidermal growth factor receptor (EGFR). Mimics, both structurally and functionally, vertebrate epidermal growth factor (EGF) peptide hormones. In vivo, intraplantar injection in mice causes long-lasting (several days) hypersensitivity of the injected paw to both mechanical and thermal stimuli. Its long-lasting effect is unusual for venom toxins whose effects are usually immediate. One possible explanation is that it would reduce the duration of a nest attack, discourage future attacks, or enhance the actions of subsequent exposure to other pain-inducing venom peptides. This chain is OMEGA-ectatommitoxin(02)-Rm1b, found in Rhytidoponera metallica (Australian green-headed ant).